The sequence spans 508 residues: Photosystem II CP47 reaction center protein (508 aa).

The next 6 membrane-spanning stretches (helical) occupy residues 21–36, 101–115, 140–156, 203–218, 237–252, and 457–472; these read AVHIMHTALVAGWAGS, IVFSGLCFLAAIWHW, GIHLFLAGVACFGFGAF, IAAGTLGILAGLFHLS, VLSSSIAAVFFAAFVV, and SFALLFFFGHIWHGAR.

The protein belongs to the PsbB/PsbC family. PsbB subfamily. In terms of assembly, PSII is composed of 1 copy each of membrane proteins PsbA, PsbB, PsbC, PsbD, PsbE, PsbF, PsbH, PsbI, PsbJ, PsbK, PsbL, PsbM, PsbT, PsbX, PsbY, PsbZ, Psb30/Ycf12, at least 3 peripheral proteins of the oxygen-evolving complex and a large number of cofactors. It forms dimeric complexes. It depends on Binds multiple chlorophylls. PSII binds additional chlorophylls, carotenoids and specific lipids. as a cofactor.

It is found in the plastid. It localises to the chloroplast thylakoid membrane. Its function is as follows. One of the components of the core complex of photosystem II (PSII). It binds chlorophyll and helps catalyze the primary light-induced photochemical processes of PSII. PSII is a light-driven water:plastoquinone oxidoreductase, using light energy to abstract electrons from H(2)O, generating O(2) and a proton gradient subsequently used for ATP formation. This chain is Photosystem II CP47 reaction center protein, found in Trachelium caeruleum (Blue throatwort).